Here is a 225-residue protein sequence, read N- to C-terminus: Chromosome partition protein MukE (225 aa).

Residues 197–225 (RDGEAMPIENHLQLNDETEESQPDSGEEE) form a disordered region. A compositionally biased stretch (acidic residues) spans 212 to 225 (DETEESQPDSGEEE).

Belongs to the MukE family. In terms of assembly, interacts, and probably forms a ternary complex, with MukF and MukB. The complex formation is stimulated by calcium or magnesium.

The protein resides in the cytoplasm. It localises to the nucleoid. Functionally, involved in chromosome condensation, segregation and cell cycle progression. May participate in facilitating chromosome segregation by condensation DNA from both sides of a centrally located replisome during cell division. Probably acts via its interaction with MukB and MukF. This is Chromosome partition protein MukE from Salmonella typhi.